We begin with the raw amino-acid sequence, 952 residues long: Valine--tRNA ligase (952 aa).

The 'HIGH' region motif lies at 42–52; it reads PNVTGSLHMGH. A 'KMSKS' region motif is present at residues 554 to 558; that stretch reads KMSKS. Position 557 (Lys-557) interacts with ATP. Residues 888–952 adopt a coiled-coil conformation; it reads AELARLDGEI…EEQKKTIAAL (65 aa).

It belongs to the class-I aminoacyl-tRNA synthetase family. ValS type 1 subfamily. Monomer.

It localises to the cytoplasm. The catalysed reaction is tRNA(Val) + L-valine + ATP = L-valyl-tRNA(Val) + AMP + diphosphate. Functionally, catalyzes the attachment of valine to tRNA(Val). As ValRS can inadvertently accommodate and process structurally similar amino acids such as threonine, to avoid such errors, it has a 'posttransfer' editing activity that hydrolyzes mischarged Thr-tRNA(Val) in a tRNA-dependent manner. The sequence is that of Valine--tRNA ligase from Vibrio parahaemolyticus serotype O3:K6 (strain RIMD 2210633).